A 365-amino-acid chain; its full sequence is NAD(P)H-quinone oxidoreductase subunit 1, chloroplastic (365 aa).

A run of 6 helical transmembrane segments spans residues 30-50 (LVPI…IVWL), 104-124 (IAVI…HFVL), 129-149 (IGVF…LMSG), 253-273 (FGLF…FVAV), 302-322 (VFGT…FLFI), and 338-358 (LLNL…LLTT).

This sequence belongs to the complex I subunit 1 family. In terms of assembly, NDH is composed of at least 16 different subunits, 5 of which are encoded in the nucleus.

It localises to the plastid. Its subcellular location is the chloroplast thylakoid membrane. It carries out the reaction a plastoquinone + NADH + (n+1) H(+)(in) = a plastoquinol + NAD(+) + n H(+)(out). It catalyses the reaction a plastoquinone + NADPH + (n+1) H(+)(in) = a plastoquinol + NADP(+) + n H(+)(out). Functionally, NDH shuttles electrons from NAD(P)H:plastoquinone, via FMN and iron-sulfur (Fe-S) centers, to quinones in the photosynthetic chain and possibly in a chloroplast respiratory chain. The immediate electron acceptor for the enzyme in this species is believed to be plastoquinone. Couples the redox reaction to proton translocation, and thus conserves the redox energy in a proton gradient. The sequence is that of NAD(P)H-quinone oxidoreductase subunit 1, chloroplastic from Populus trichocarpa (Western balsam poplar).